The primary structure comprises 309 residues: Homoserine kinase (309 aa).

91 to 101 (PIGSGLGSSAC) lines the ATP pocket.

Belongs to the GHMP kinase family. Homoserine kinase subfamily.

It localises to the cytoplasm. It carries out the reaction L-homoserine + ATP = O-phospho-L-homoserine + ADP + H(+). The protein operates within amino-acid biosynthesis; L-threonine biosynthesis; L-threonine from L-aspartate: step 4/5. In terms of biological role, catalyzes the ATP-dependent phosphorylation of L-homoserine to L-homoserine phosphate. The sequence is that of Homoserine kinase from Escherichia fergusonii (strain ATCC 35469 / DSM 13698 / CCUG 18766 / IAM 14443 / JCM 21226 / LMG 7866 / NBRC 102419 / NCTC 12128 / CDC 0568-73).